The sequence spans 192 residues: Thymidine kinase (192 aa).

Residues 9-16 and 87-90 each bind ATP; these read SAMNAGKS and DECQ. The active-site Proton acceptor is the glutamate 88. Zn(2+) contacts are provided by cysteine 145, cysteine 147, cysteine 182, and histidine 185.

This sequence belongs to the thymidine kinase family. Homotetramer.

The protein resides in the cytoplasm. The enzyme catalyses thymidine + ATP = dTMP + ADP + H(+). The protein is Thymidine kinase of Aliivibrio fischeri (strain ATCC 700601 / ES114) (Vibrio fischeri).